A 93-amino-acid polypeptide reads, in one-letter code: uncharacterized protein (93 aa).

This is an uncharacterized protein from Bacillus subtilis (strain 168).